The chain runs to 149 residues: Ribonuclease H (149 aa).

An RNase H type-1 domain is found at 1 to 143 (MNAVEIYTDG…ADMLANRGVE (143 aa)). Positions 9, 47, 69, and 135 each coordinate Mg(2+).

Belongs to the RNase H family. Monomer. The cofactor is Mg(2+).

It is found in the cytoplasm. It carries out the reaction Endonucleolytic cleavage to 5'-phosphomonoester.. Functionally, endonuclease that specifically degrades the RNA of RNA-DNA hybrids. The chain is Ribonuclease H from Albidiferax ferrireducens (strain ATCC BAA-621 / DSM 15236 / T118) (Rhodoferax ferrireducens).